A 613-amino-acid chain; its full sequence is Protein starmaker (613 aa).

The first 20 residues, 1 to 20 (MLSRTVFVPLILAFVGVSIS), serve as a signal peptide directing secretion. Positions 42-613 (FTVQFNVGTP…DGRKTSMPIS (572 aa)) are disordered. Composition is skewed to basic and acidic residues over residues 62 to 72 (DGKDSAEKNEA), 117 to 132 (SAEK…DKPD), 147 to 193 (DASH…KPEG), 206 to 284 (SAEK…KSDD), and 291 to 449 (DEQK…HSDS). Acidic residues predominate over residues 450 to 465 (DSDSDSDSDSDSDSDS). Basic and acidic residues-rich tracts occupy residues 467 to 482 (SNSR…SSES), 509 to 521 (DKDS…KTDS), and 538 to 554 (DDSK…TAEK). Residues 555-573 (TDEDSHDVSDDDDDIDAHD) are compositionally biased toward acidic residues. A compositionally biased stretch (basic and acidic residues) spans 574–607 (DEAGVEHGTDEASKPHQEPDHHDDTTHGSDDGRK).

Its subcellular location is the secreted. In terms of biological role, essential for the formation of otoliths in the inner ear of developing larvae and for the perception of gravity and acceleration. May be one of the organic components of the ortholiths. The polypeptide is Protein starmaker (stm) (Danio rerio (Zebrafish)).